We begin with the raw amino-acid sequence, 382 residues long: V-type proton ATPase subunit C 1 (382 aa).

At Thr-2 the chain carries N-acetylthreonine.

It belongs to the V-ATPase C subunit family. As to quaternary structure, V-ATPase is a heteromultimeric enzyme made up of two complexes: the ATP-hydrolytic V1 complex and the proton translocation V0 complex. The V1 complex consists of three catalytic AB heterodimers that form a heterohexamer, three peripheral stalks each consisting of EG heterodimers, one central rotor including subunits D and F, and the regulatory subunits C and H. The proton translocation complex V0 consists of the proton transport subunit a, a ring of proteolipid subunits c9c'', rotary subunit d, subunits e and f, and the accessory subunits ATP6AP1/Ac45 and ATP6AP2/PRR. Expressed in brain (at protein level).

It is found in the cytoplasmic vesicle. The protein localises to the secretory vesicle. It localises to the synaptic vesicle membrane. Its subcellular location is the clathrin-coated vesicle membrane. In terms of biological role, subunit of the V1 complex of vacuolar(H+)-ATPase (V-ATPase), a multisubunit enzyme composed of a peripheral complex (V1) that hydrolyzes ATP and a membrane integral complex (V0) that translocates protons. V-ATPase is responsible for acidifying and maintaining the pH of intracellular compartments and in some cell types, is targeted to the plasma membrane, where it is responsible for acidifying the extracellular environment. Subunit C is necessary for the assembly of the catalytic sector of the enzyme and is likely to have a specific function in its catalytic activity. The chain is V-type proton ATPase subunit C 1 (ATP6V1C1) from Bos taurus (Bovine).